The following is a 339-amino-acid chain: Ketol-acid reductoisomerase (NADP(+)) (339 aa).

The KARI N-terminal Rossmann domain maps to Met-1–Thr-182. Residues Tyr-24–Gln-27, Arg-48, Ser-51, Ser-53, and Asp-83–Gln-86 contribute to the NADP(+) site. His-108 is an active-site residue. An NADP(+)-binding site is contributed by Gly-134. One can recognise a KARI C-terminal knotted domain in the interval Thr-183–Ile-328. Residues Asp-191, Glu-195, Glu-227, and Glu-231 each coordinate Mg(2+). Ser-252 contributes to the substrate binding site.

Belongs to the ketol-acid reductoisomerase family. Mg(2+) is required as a cofactor.

It carries out the reaction (2R)-2,3-dihydroxy-3-methylbutanoate + NADP(+) = (2S)-2-acetolactate + NADPH + H(+). The catalysed reaction is (2R,3R)-2,3-dihydroxy-3-methylpentanoate + NADP(+) = (S)-2-ethyl-2-hydroxy-3-oxobutanoate + NADPH + H(+). It functions in the pathway amino-acid biosynthesis; L-isoleucine biosynthesis; L-isoleucine from 2-oxobutanoate: step 2/4. The protein operates within amino-acid biosynthesis; L-valine biosynthesis; L-valine from pyruvate: step 2/4. Functionally, involved in the biosynthesis of branched-chain amino acids (BCAA). Catalyzes an alkyl-migration followed by a ketol-acid reduction of (S)-2-acetolactate (S2AL) to yield (R)-2,3-dihydroxy-isovalerate. In the isomerase reaction, S2AL is rearranged via a Mg-dependent methyl migration to produce 3-hydroxy-3-methyl-2-ketobutyrate (HMKB). In the reductase reaction, this 2-ketoacid undergoes a metal-dependent reduction by NADPH to yield (R)-2,3-dihydroxy-isovalerate. In Nitrobacter winogradskyi (strain ATCC 25391 / DSM 10237 / CIP 104748 / NCIMB 11846 / Nb-255), this protein is Ketol-acid reductoisomerase (NADP(+)).